The sequence spans 611 residues: Chaperonin 60 subunit beta 4, chloroplastic (611 aa).

The transit peptide at 1–37 (MAFSQAALSALPLSDRTFRKKPSSSSSSSPNFVLRVR) directs the protein to the chloroplast. Residues 377 to 480 (QKAVDERVSQ…LDNTEQKIGA (104 aa)) adopt a coiled-coil conformation. Residues 574 to 595 (INPPLPTSSPATSSMFPDRKLP) are disordered.

This sequence belongs to the chaperonin (HSP60) family. As to quaternary structure, part of the Cpn60 complex composed of 7 alpha and 7 beta subunits. Can also form a complex composed of 14 beta subunits only. Both complexes show ATPase activity. The Cpn60 complex interacts with the Cpn10 complex. Interacts with NDHH.

It is found in the plastid. The protein localises to the chloroplast stroma. In terms of biological role, involved specifically in the folding of NDHH, a subunit of the chloroplast NADH dehydrogenase-like complex (NDH). In Arabidopsis thaliana (Mouse-ear cress), this protein is Chaperonin 60 subunit beta 4, chloroplastic (CPN60B4).